A 604-amino-acid chain; its full sequence is Terpenoid synthase 30 (604 aa).

The Mg(2+) site is built by Asn-356, Asp-360, Asn-500, Thr-504, and Glu-508. The short motif at 356–360 (NDVCD) is the DDXXD motif; degenerate element.

This sequence belongs to the terpene synthase family. Tpsa subfamily. The cofactor is Mg(2+). Mn(2+) serves as cofactor.

The protein localises to the cytoplasm. It participates in secondary metabolite biosynthesis; terpenoid biosynthesis. Functionally, involved in terpene biosynthesis in roots. Possesses sesquiterpene (C15) synthase activity and diterpene (C20) synthase activity in vitro. The polypeptide is Terpenoid synthase 30 (Arabidopsis thaliana (Mouse-ear cress)).